Reading from the N-terminus, the 344-residue chain is tRNA N6-adenosine threonylcarbamoyltransferase (344 aa).

2 residues coordinate Fe cation: His-112 and His-116. Residues 135–139 (LVSGG), Asp-168, Gly-181, and Asn-271 contribute to the substrate site. Asp-299 contributes to the Fe cation binding site. The tract at residues 323 to 344 (RARPRWPLDPEAEPVRGAGVKA) is disordered.

The protein belongs to the KAE1 / TsaD family. Requires Fe(2+) as cofactor.

It localises to the cytoplasm. The enzyme catalyses L-threonylcarbamoyladenylate + adenosine(37) in tRNA = N(6)-L-threonylcarbamoyladenosine(37) in tRNA + AMP + H(+). Required for the formation of a threonylcarbamoyl group on adenosine at position 37 (t(6)A37) in tRNAs that read codons beginning with adenine. Is involved in the transfer of the threonylcarbamoyl moiety of threonylcarbamoyl-AMP (TC-AMP) to the N6 group of A37, together with TsaE and TsaB. TsaD likely plays a direct catalytic role in this reaction. The protein is tRNA N6-adenosine threonylcarbamoyltransferase of Erythrobacter litoralis (strain HTCC2594).